Here is a 138-residue protein sequence, read N- to C-terminus: 16 kDa phloem protein 2 (138 aa).

One can recognise a C2 domain in the interval 1-108 (MGMGMMEVHL…LAEGVRKGWS (108 aa)). The Ca(2+) site is built by aspartate 20, aspartate 27, aspartate 78, aspartate 80, and aspartate 86.

Ca(2+) is required as a cofactor. As to expression, sieve elements of leaves, stems, roots and flowers.

Binds to both sense and antisense RNA. Interacts with mesophyll plasmodesmata to mediate its own cell-to-cell transport and potentiate RNA trafficking. The chain is 16 kDa phloem protein 2 (PP16-2) from Cucurbita maxima (Pumpkin).